Consider the following 456-residue polypeptide: MKLMRKNETREFLIEDIEFPAVGVAFYNDKKVYIKGAVPGQKVLARVSKVRREKIEAKLKEIVTNIPGAAQPKCPDFGVCGGCVHQFLPYEKQLEFKEREVLKLFKDAKIEGFEYLGILGSPEKEEYRNKMEYTFGDFVKGGELTLGMHAKNSGFSIVNTDKCNIVDEDFRIILKTVVEYFRKKDLPIYKVMQHVGYLRNLVVRKAKNTGEILIALVTTSQVDFDLTELTEILKSINYLGELKGILHVINDGLADMVRGDKIVTLFGQDYITERILDLKFKISLFSFFQTNSKGAEKLYSEVLEFLGDVSNKTVFDLYCGTGTIGQLASKKAEKVIGIELIEEAVEAAKENTKLNNISNCSFIAGDVAKVITEIKEKPDTIILDPPRPGVSPNAMKYVIKFNAPEIVYVSCNPKTLVNDLGVLRAYGYEVEKVKIVDMFPGTGHVETVVLLQRKII.

The TRAM domain maps to 3-61 (LMRKNETREFLIEDIEFPAVGVAFYNDKKVYIKGAVPGQKVLARVSKVRREKIEAKLKE). Positions 74, 80, 83, and 163 each coordinate [4Fe-4S] cluster. Positions 289, 318, 339, and 384 each coordinate S-adenosyl-L-methionine. The active-site Nucleophile is the Cys-411.

It belongs to the class I-like SAM-binding methyltransferase superfamily. RNA M5U methyltransferase family.

This is an uncharacterized protein from Clostridium acetobutylicum (strain ATCC 824 / DSM 792 / JCM 1419 / IAM 19013 / LMG 5710 / NBRC 13948 / NRRL B-527 / VKM B-1787 / 2291 / W).